A 459-amino-acid chain; its full sequence is Putrescine aminotransferase (459 aa).

Residues 150–151 (GT) and Q274 each bind pyridoxal 5'-phosphate. K300 is subject to N6-(pyridoxal phosphate)lysine. T332 lines the pyridoxal 5'-phosphate pocket.

Belongs to the class-III pyridoxal-phosphate-dependent aminotransferase family. Putrescine aminotransferase subfamily. Pyridoxal 5'-phosphate serves as cofactor.

It carries out the reaction an alkane-alpha,omega-diamine + 2-oxoglutarate = an omega-aminoaldehyde + L-glutamate. The catalysed reaction is putrescine + 2-oxoglutarate = 1-pyrroline + L-glutamate + H2O. The enzyme catalyses cadaverine + 2-oxoglutarate = 5-aminopentanal + L-glutamate. It functions in the pathway amine and polyamine degradation; putrescine degradation; 4-aminobutanal from putrescine (transaminase route): step 1/1. Catalyzes the aminotransferase reaction from putrescine to 2-oxoglutarate, leading to glutamate and 4-aminobutanal, which spontaneously cyclizes to form 1-pyrroline. This is the first step in one of two pathways for putrescine degradation, where putrescine is converted into 4-aminobutanoate (gamma-aminobutyrate or GABA) via 4-aminobutanal. Also functions as a cadaverine transaminase in a a L-lysine degradation pathway to succinate that proceeds via cadaverine, glutarate and L-2-hydroxyglutarate. The polypeptide is Putrescine aminotransferase (Escherichia coli O7:K1 (strain IAI39 / ExPEC)).